A 108-amino-acid polypeptide reads, in one-letter code: Ig kappa chain V-V region HP 124E1 (108 aa).

The framework-1 stretch occupies residues D1–C23. C23 and C88 are joined by a disulfide. The tract at residues R24–N34 is complementarity-determining-1. A framework-2 region spans residues W35–Y49. The segment at Y50 to S56 is complementarity-determining-2. The framework-3 stretch occupies residues G57 to C88. Residues Q89 to T97 are complementarity-determining-3. The tract at residues F98–R108 is framework-4.

This is Ig kappa chain V-V region HP 124E1 from Mus musculus (Mouse).